Consider the following 76-residue polypeptide: Brevinin-2ISb (76 aa).

Positions 1–22 (MFTMKKSLLVLFFLGTISLSLC) are cleaved as a signal peptide. The propeptide at 23–41 (QEERNADEEDGGEATEEEV) is removed in mature form. An intrachain disulfide couples Cys-70 to Cys-76.

As to expression, expressed by the skin glands.

The protein localises to the secreted. In terms of biological role, has antimicrobial activity against Gram-negative bacterium E.coli ATCC 8739 (MIC=12.5 ug), against Gram positive bacteria S.aureus ATCC 6538 (MIC=6.3 ug) and B.subtilis ATCC 6633 (MIC=25 ug). Has no activity against methicillin-resistant S.aureus ATCC 43300 (MIC= ug) and fungus C.albicans ATCC 90028. This is Brevinin-2ISb from Odorrana ishikawae (Ishikawa's frog).